The sequence spans 74 residues: Alpha-elapitoxin-Aa2d (74 aa).

5 disulfides stabilise this stretch: C3/C21, C14/C42, C27/C31, C46/C57, and C58/C63.

It belongs to the three-finger toxin family. Long-chain subfamily. Type II alpha-neurotoxin sub-subfamily. As to expression, expressed by the venom gland.

It is found in the secreted. Functionally, binds with high affinity to muscular (alpha-1/CHRNA1) and neuronal (alpha-7/CHRNA7) nicotinic acetylcholine receptor (nAChR) and inhibits acetylcholine from binding to the receptor, thereby impairing neuromuscular and neuronal transmission. The protein is Alpha-elapitoxin-Aa2d of Acanthophis antarcticus (Common death adder).